The following is a 228-amino-acid chain: Putative NAC domain-containing protein 61 (228 aa).

Positions 5 to 156 constitute an NAC domain; that stretch reads LSVGFRFYPT…KSGSSRAFDR (152 aa). Disordered regions lie at residues 77–96 and 166–197; these read ARGGRPSRTTGSGYWKATGS and RNLPSNGVETSSRATISTSPETSHSGGNQVDL. The span at 80-89 shows a compositional bias: low complexity; that stretch reads GRPSRTTGSG. Positions 168 to 193 are enriched in polar residues; that stretch reads LPSNGVETSSRATISTSPETSHSGGN.

Its subcellular location is the nucleus. This chain is Putative NAC domain-containing protein 61 (NAC061), found in Arabidopsis thaliana (Mouse-ear cress).